The following is a 310-amino-acid chain: Olfactory receptor 4C11 (310 aa).

Residues 1–23 lie on the Extracellular side of the membrane; it reads MQQNNSVPEFILLGLTQDPLRQK. An N-linked (GlcNAc...) asparagine glycan is attached at Asn-4. A helical membrane pass occupies residues 24-47; that stretch reads IVFVIFLIFYMGTVVGNMLIIVTI. Over 48-55 the chain is Cytoplasmic; that stretch reads KSSRTLGS. The helical transmembrane segment at 56 to 77 threads the bilayer; that stretch reads PMYFFLFYLSFADSCFSTSTAP. Residues 78–98 lie on the Extracellular side of the membrane; it reads RLIVDALSEKKIITYNECMTQ. An intrachain disulfide couples Cys-95 to Cys-187. A helical membrane pass occupies residues 99–118; sequence VFALHLFGCMEIFVLILMAV. The Cytoplasmic segment spans residues 119-137; that stretch reads DRYVAICKPLRYPTIMSQQ. The helical transmembrane segment at 138–156 threads the bilayer; it reads VCIILIVLAWIGSLIHSTA. Topologically, residues 157-193 are extracellular; sequence QIILALRLPFCGPYLIDHYCCDLQPLLKLACMDTYMI. The chain crosses the membrane as a helical span at residues 194-217; sequence NLLLVSNSGAICSSSFMILIISYI. The Cytoplasmic portion of the chain corresponds to 218-233; sequence VILHSLRNHSAKGKKK. The helical transmembrane segment at 234–256 threads the bilayer; that stretch reads ALSACTSHIIVVILFFGPCIFIY. Residues 257–267 are Extracellular-facing; the sequence is TRPPTTFPMDK. Residues 268 to 287 form a helical membrane-spanning segment; sequence MVAVFYTIGTPFLNPLIYTL. The Cytoplasmic segment spans residues 288–310; it reads RNAEVKNAMRKLWHGKIISENKG.

The protein belongs to the G-protein coupled receptor 1 family.

The protein resides in the cell membrane. Odorant receptor. This chain is Olfactory receptor 4C11 (OR4C11), found in Homo sapiens (Human).